Here is a 404-residue protein sequence, read N- to C-terminus: S-adenosylmethionine synthase (404 aa).

Residue 139 to 144 participates in ATP binding; it reads GKGSSD.

Belongs to the AdoMet synthase 2 family. Requires Mg(2+) as cofactor.

It carries out the reaction L-methionine + ATP + H2O = S-adenosyl-L-methionine + phosphate + diphosphate. The protein operates within amino-acid biosynthesis; S-adenosyl-L-methionine biosynthesis; S-adenosyl-L-methionine from L-methionine: step 1/1. Catalyzes the formation of S-adenosylmethionine from methionine and ATP. The chain is S-adenosylmethionine synthase from Saccharolobus solfataricus (strain ATCC 35092 / DSM 1617 / JCM 11322 / P2) (Sulfolobus solfataricus).